The following is an 848-amino-acid chain: Xylosyltransferase (848 aa).

Over 1–14 (MSLHRTLRRFLRKW) the chain is Cytoplasmic. The helical; Signal-anchor for type II membrane protein transmembrane segment at 15-35 (KALVYAVSFILLIQAFFTFQS) threads the bilayer. The Lumenal portion of the chain corresponds to 36-843 (SPNLMEEEHL…PKTELISVKP (808 aa)). Disulfide bonds link cysteine 145–cysteine 173, cysteine 189–cysteine 427, cysteine 446–cysteine 459, and cysteine 448–cysteine 457. Residues valine 219, aspartate 247, and 276–278 (TIW) contribute to the UDP-alpha-D-xylose site. Asparagine 306 carries N-linked (GlcNAc...) asparagine glycosylation. 379-380 (DW) serves as a coordination point for UDP-alpha-D-xylose. UDP-alpha-D-xylose-binding positions include serine 460 and 482–483 (RK). Disulfide bonds link cysteine 529–cysteine 811 and cysteine 794–cysteine 822. N-linked (GlcNAc...) asparagine glycosylation is present at asparagine 530. The disordered stretch occupies residues 824-848 (NTNWSSLSPDPKTELISVKPDGRIR). Residue asparagine 826 is glycosylated (N-linked (GlcNAc...) asparagine).

Belongs to the glycosyltransferase 14 family. XylT subfamily. Requires a divalent metal cation as cofactor.

It localises to the endoplasmic reticulum membrane. Its subcellular location is the golgi apparatus membrane. It catalyses the reaction UDP-alpha-D-xylose + L-seryl-[protein] = 3-O-(beta-D-xylosyl)-L-seryl-[protein] + UDP + H(+). Its pathway is glycan metabolism; chondroitin sulfate biosynthesis. The protein operates within glycan metabolism; heparan sulfate biosynthesis. In terms of biological role, catalyzes the first step in biosynthesis of glycosaminoglycan. Transfers D-xylose from UDP-D-xylose to specific serine residues of the core protein. Initial enzyme in the biosynthesis of chondroitin sulfate and dermatan sulfate proteoglycans in fibroblasts and chondrocytes. In Ciona intestinalis (Transparent sea squirt), this protein is Xylosyltransferase (xt).